We begin with the raw amino-acid sequence, 314 residues long: Olfactory receptor 1E1 (314 aa).

The Extracellular portion of the chain corresponds to Met1 to Asn25. Asn5 carries N-linked (GlcNAc...) asparagine glycosylation. The helical transmembrane segment at Leu26–Ile49 threads the bilayer. At Arg50–Thr57 the chain is on the cytoplasmic side. A helical transmembrane segment spans residues Pro58 to Pro79. Residues Lys80–Gln100 are Extracellular-facing. A helical membrane pass occupies residues Met101 to Tyr120. Over Asp121 to Met139 the chain is Cytoplasmic. Residues Leu140–Leu158 form a helical membrane-spanning segment. Residues His159 to Asn195 are Extracellular-facing. The helical transmembrane segment at Glu196–Ala219 threads the bilayer. The Cytoplasmic portion of the chain corresponds to Arg220–Lys236. Residues Ala237–Tyr259 traverse the membrane as a helical segment. The Extracellular segment spans residues Leu260–Thr272. A helical membrane pass occupies residues Val273–Leu292. The Cytoplasmic portion of the chain corresponds to Arg293 to Leu314.

Belongs to the G-protein coupled receptor 1 family.

The protein resides in the cell membrane. In terms of biological role, odorant receptor. This Homo sapiens (Human) protein is Olfactory receptor 1E1 (OR1E1).